Reading from the N-terminus, the 447-residue chain is Dihydroorotase (447 aa).

Zn(2+) contacts are provided by His81 and His83. Residues 83-85 (HFR) and Asn115 each bind substrate. Residues Asp171, His198, and His252 each contribute to the Zn(2+) site. Asn298 provides a ligand contact to substrate. Asp325 is a Zn(2+) binding site. Asp325 is an active-site residue. Substrate-binding positions include His329 and 343–344 (FG).

Belongs to the metallo-dependent hydrolases superfamily. DHOase family. Class I DHOase subfamily. It depends on Zn(2+) as a cofactor.

It carries out the reaction (S)-dihydroorotate + H2O = N-carbamoyl-L-aspartate + H(+). It participates in pyrimidine metabolism; UMP biosynthesis via de novo pathway; (S)-dihydroorotate from bicarbonate: step 3/3. Functionally, catalyzes the reversible cyclization of carbamoyl aspartate to dihydroorotate. The sequence is that of Dihydroorotase from Ehrlichia canis (strain Jake).